Reading from the N-terminus, the 411-residue chain is 2,3-bisphosphoglycerate-independent phosphoglycerate mutase (411 aa).

This sequence belongs to the BPG-independent phosphoglycerate mutase family. A-PGAM subfamily.

It carries out the reaction (2R)-2-phosphoglycerate = (2R)-3-phosphoglycerate. The protein operates within carbohydrate degradation; glycolysis; pyruvate from D-glyceraldehyde 3-phosphate: step 3/5. Catalyzes the interconversion of 2-phosphoglycerate and 3-phosphoglycerate. The polypeptide is 2,3-bisphosphoglycerate-independent phosphoglycerate mutase (Pyrobaculum calidifontis (strain DSM 21063 / JCM 11548 / VA1)).